The chain runs to 310 residues: 4-hydroxyproline 2-epimerase (310 aa).

Cysteine 88 serves as the catalytic Proton acceptor. Residues 89-90 (GH), histidine 208, and aspartate 232 contribute to the substrate site. Cysteine 236 serves as the catalytic Proton donor. 237 to 238 (GT) contributes to the substrate binding site.

It belongs to the proline racemase family.

The enzyme catalyses trans-4-hydroxy-L-proline = cis-4-hydroxy-D-proline. Its function is as follows. Catalyzes the epimerization of trans-4-hydroxy-L-proline (t4LHyp) to cis-4-hydroxy-D-proline (c4DHyp). Is likely involved in a degradation pathway that converts t4LHyp to alpha-ketoglutarate. Can also catalyze the dehydration of trans-3-hydroxy-L-proline (t3LHyp) to Delta(1)-pyrroline-2-carboxylate (Pyr2C), albeit with 42-fold lower efficiency. Displays no proline racemase activity. The chain is 4-hydroxyproline 2-epimerase from Burkholderia thailandensis (strain ATCC 700388 / DSM 13276 / CCUG 48851 / CIP 106301 / E264).